The following is a 144-amino-acid chain: Galectin a (144 aa).

A Galectin domain is found at 1 to 138; sequence DHIDLEFDVG…DAVLRKLCVV (138 aa).

As to quaternary structure, tetramer.

Lectin that binds beta-galactoside and a wide array of complex carbohydrates. In Aplysina lactuca (Marine sponge), this protein is Galectin a.